The primary structure comprises 769 residues: MDIGKKHVIPKSQYRRKRREFFHNEDREENLNQHQDKQNIDNTTSKKADKQIHKDSIDKHERFKNSLSSHLEQRNRDVNENKAEESKSNQDSKSAYNRDHYLTDDVSKKQNSLDSVDQDTEKSKYYEQNSEATLSTKSTDKVESTDMRKLSSDKNKVGHEEQHVLSKPSEHDKETRIDFESSRTDSDSSMQTEKIKKDSSDGNKSSNLKSEVISDKSNTVPKLSESDDEVNNQKPLTLPEEQKLKRQQSQNEQTKTYTYGDSEQNDKSNYENDLSHHMPSISDDKDNVMRENHIVDDNPDNDINTPSLSKTDDDRKLDEKIHVEDKHKQNADSSETVGYQSQSSASHRITEKRNNAINDHDKLNGQKPNAKTSANNNQKKATSKLNKGRATNNNYSDILKKFWMMYWPKLVILMGIIILIVILNAIFNNVNKNDRMNDNNDADAQKYTTTMKNANNTVKSVVTVENETSKDSSLPKDKASQDEVGSGVVYKKSGDTLYIVTNAHVVGDKENQKITFSNNKSVVGKVLGKDKWSDLAVVKATSSDSSVKEIAIGDSNNLVLGEPILVVGNPLGVDFKGTVTEGIISGLNRNVPIDFDKDNKYDMLMKAFQIDASVNPGNSGGAVVNREGKLIGVVAAKISMPNVENMSFAIPVNEVQKIVKDLETKGKIDYPDVGVKMKNIASLNSFERQAVKLPGKVKNGVVVDQVDNNGLADQSGLKKGDVITELDGKLLEDDLRFRQIIFSHKDDLKSITAKIYRDGKEKEINIKLK.

The span at 1–20 (MDIGKKHVIPKSQYRRKRRE) shows a compositional bias: basic residues. The tract at residues 1–390 (MDIGKKHVIP…ATSKLNKGRA (390 aa)) is disordered. 2 stretches are compositionally biased toward basic and acidic residues: residues 21–64 (FFHN…ERFK) and 71–108 (LEQRNRDVNENKAEESKSNQDSKSAYNRDHYLTDDVSK). The segment covering 126–137 (YEQNSEATLSTK) has biased composition (polar residues). The segment covering 138-186 (STDKVESTDMRKLSSDKNKVGHEEQHVLSKPSEHDKETRIDFESSRTDS) has biased composition (basic and acidic residues). A compositionally biased stretch (polar residues) spans 247-262 (QQSQNEQTKTYTYGDS). 2 stretches are compositionally biased toward basic and acidic residues: residues 264 to 296 (QNDKSNYENDLSHHMPSISDDKDNVMRENHIVD) and 310 to 330 (KTDDDRKLDEKIHVEDKHKQN). The span at 331-347 (ADSSETVGYQSQSSASH) shows a compositional bias: polar residues. Residues 348–364 (RITEKRNNAINDHDKLN) are compositionally biased toward basic and acidic residues. Residues 366–390 (QKPNAKTSANNNQKKATSKLNKGRA) are compositionally biased toward polar residues. A helical membrane pass occupies residues 410–430 (LVILMGIIILIVILNAIFNNV). Active-site charge relay system residues include His-504, Asp-534, and Ser-619. The 54-residue stretch at 680–733 (IASLNSFERQAVKLPGKVKNGVVVDQVDNNGLADQSGLKKGDVITELDGKLLED) folds into the PDZ domain.

The protein belongs to the peptidase S1C family.

It is found in the cell membrane. This chain is Serine protease HtrA-like, found in Staphylococcus aureus (strain MSSA476).